Consider the following 418-residue polypeptide: Creatine kinase U-type, mitochondrial (418 aa).

The transit peptide at 1 to 39 directs the protein to the mitochondrion; sequence MAGPFSRLLSARPGLKLLALAGAGSLAAGILLRPESVRA. A cardiolipin-binding region spans residues 40–64; the sequence is ATGERRRLYPPSAEYPDLRKHNNCM. In terms of domain architecture, Phosphagen kinase N-terminal spans 46–132; it reads RLYPPSAEYP…FDPVIQERHN (87 aa). Residue Ser152 is modified to Phosphoserine. One can recognise a Phosphagen kinase C-terminal domain in the interval 159 to 401; it reads YVLSSRVRTG…NYLIDCERRL (243 aa). Position 162–166 (162–166) interacts with ATP; that stretch reads SSRVR. Residue Ser197 is modified to Phosphoserine. Thr214 is modified (phosphothreonine). Residue His225 coordinates ATP. Phosphoserine is present on Ser233. ATP is bound by residues Arg270, Arg326, 354-359, and Asp369; that span reads RGTGGV. Thr356 carries the phosphothreonine modification.

The protein belongs to the ATP:guanido phosphotransferase family. As to quaternary structure, exists as an octamer composed of four MTCK homodimers. As to expression, in many tissues, with highest levels in brain gut and kidney. In the kidney localized primarily in the outer medulla in the thick ascending limb and distal convoluted tubule.

The protein localises to the mitochondrion inner membrane. The catalysed reaction is creatine + ATP = N-phosphocreatine + ADP + H(+). Functionally, reversibly catalyzes the transfer of phosphate between ATP and various phosphogens (e.g. creatine phosphate). Creatine kinase isoenzymes play a central role in energy transduction in tissues with large, fluctuating energy demands, such as skeletal muscle, heart, brain and spermatozoa. The chain is Creatine kinase U-type, mitochondrial (Ckmt1) from Rattus norvegicus (Rat).